Here is a 242-residue protein sequence, read N- to C-terminus: ATP synthase subunit a, chloroplastic (242 aa).

A run of 5 helical transmembrane segments spans residues 34 to 54 (GQVLVVVWFVLALLLLFAVLG), 93 to 113 (VPFIGTLFLFIFGCNWAGAII), 132 to 152 (INTTVALALLTSLAYFYAGLS), 188 to 210 (LFGNVLADELTITVLTSLVPLVI), and 222 to 242 (GSVQALIFSTLAAAYIAEALE).

It belongs to the ATPase A chain family. In terms of assembly, F-type ATPases have 2 components, CF(1) - the catalytic core - and CF(0) - the membrane proton channel. CF(1) has five subunits: alpha(3), beta(3), gamma(1), delta(1), epsilon(1). CF(0) has four main subunits: a, b, b' and c.

It is found in the plastid. Its subcellular location is the chloroplast thylakoid membrane. Functionally, key component of the proton channel; it plays a direct role in the translocation of protons across the membrane. The sequence is that of ATP synthase subunit a, chloroplastic from Trieres chinensis (Marine centric diatom).